We begin with the raw amino-acid sequence, 172 residues long: ATP synthase subunit b (172 aa).

Residues 11–30 traverse the membrane as a helical segment; it reads LIAQIINFVIVLWVLNRFAF.

This sequence belongs to the ATPase B chain family. As to quaternary structure, F-type ATPases have 2 components, F(1) - the catalytic core - and F(0) - the membrane proton channel. F(1) has five subunits: alpha(3), beta(3), gamma(1), delta(1), epsilon(1). F(0) has three main subunits: a(1), b(2) and c(10-14). The alpha and beta chains form an alternating ring which encloses part of the gamma chain. F(1) is attached to F(0) by a central stalk formed by the gamma and epsilon chains, while a peripheral stalk is formed by the delta and b chains.

The protein localises to the cell inner membrane. In terms of biological role, f(1)F(0) ATP synthase produces ATP from ADP in the presence of a proton or sodium gradient. F-type ATPases consist of two structural domains, F(1) containing the extramembraneous catalytic core and F(0) containing the membrane proton channel, linked together by a central stalk and a peripheral stalk. During catalysis, ATP synthesis in the catalytic domain of F(1) is coupled via a rotary mechanism of the central stalk subunits to proton translocation. Component of the F(0) channel, it forms part of the peripheral stalk, linking F(1) to F(0). The sequence is that of ATP synthase subunit b from Methylacidiphilum infernorum (isolate V4) (Methylokorus infernorum (strain V4)).